We begin with the raw amino-acid sequence, 753 residues long: Serine/threonine-protein phosphatase with EF-hands 2 (753 aa).

The 26-residue stretch at Lys-21–Ser-46 folds into the IQ domain. The segment at Ala-128–Lys-540 is catalytic. Residues Asp-179, His-181, Asp-208, and Asn-240 each contribute to the Mn(2+) site. The active-site Proton donor is the His-241. His-292 is a Mn(2+) binding site. Disordered regions lie at residues Cys-318 to Asp-382 and Val-409 to Gln-435. Positions Gln-322–Arg-333 are enriched in basic and acidic residues. Residues Leu-348–Leu-361 show a composition bias toward low complexity. Residues Ala-366–Cys-377 show a composition bias toward polar residues. His-488 provides a ligand contact to Mn(2+). 3 EF-hand domains span residues Ala-568–Leu-603, Arg-652–His-687, and Ile-692–Ser-727. Positions 665, 667, 669, 676, 705, 707, 709, 711, and 716 each coordinate Ca(2+). The disordered stretch occupies residues Asp-732–His-753. Residues Pro-737–His-753 show a composition bias toward polar residues.

This sequence belongs to the PPP phosphatase family. It depends on Mn(2+) as a cofactor. Retinal specific.

The protein localises to the cytoplasm. It localises to the cell projection. It is found in the cilium. The protein resides in the photoreceptor outer segment. Its subcellular location is the photoreceptor inner segment. The enzyme catalyses O-phospho-L-seryl-[protein] + H2O = L-seryl-[protein] + phosphate. It carries out the reaction O-phospho-L-threonyl-[protein] + H2O = L-threonyl-[protein] + phosphate. Its activity is regulated as follows. Activated by calcium. Functionally, may play a role in phototransduction. May dephosphorylate photoactivated rhodopsin. May function as a calcium sensing regulator of ionic currents, energy production or synaptic transmission. The polypeptide is Serine/threonine-protein phosphatase with EF-hands 2 (PPEF2) (Homo sapiens (Human)).